Here is an 82-residue protein sequence, read N- to C-terminus: Protein C14 (82 aa).

In Homo sapiens (Human), this protein is Protein C14.